Here is a 503-residue protein sequence, read N- to C-terminus: Podocalyxin (503 aa).

Positions 1–21 (MPPTTALSALLLLLLSPASHS) are cleaved as a signal peptide. Positions 19–236 (SHSHNGNETS…PLTSQTPGIT (218 aa)) are disordered. Over residues 20-50 (HSHNGNETSTSAIKSSTVQSHQSATTSTEVT) the composition is skewed to polar residues. The Extracellular segment spans residues 22–404 (HNGNETSTSA…PPEVNEDRFS (383 aa)). Residues N25, N89, and N94 are each glycosylated (N-linked (GlcNAc...) asparagine). Residues 61-91 (STQPSNPTPFTTSTQSPSMPTSTPNPTSNQS) are compositionally biased toward low complexity. The segment covering 107–126 (TSSPSSTAFTSSSGQTASSG) has biased composition (low complexity). Residues 131–183 (DSFTTAPTTTLGLINVSSQPTDLNTTSKLLSTPTTDNTTSPQQPVDSSPSTAS) show a composition bias toward polar residues. 4 N-linked (GlcNAc...) asparagine glycosylation sites follow: N145, N154, N167, and N206. The span at 196–208 (SSSGSTPSTDNST) shows a compositional bias: low complexity. Polar residues predominate over residues 222–236 (SEATQPLTSQTPGIT). N303 carries an N-linked (GlcNAc...) asparagine glycan. Residues 405–425 (LPLIITIVCMASFLLLVAALY) form a helical membrane-spanning segment. At 426-503 (GCCHQRISQR…DLDEEEDTHL (78 aa)) the chain is on the cytoplasmic side. T463 is modified (phosphothreonine). At S482 the chain carries Phosphoserine. Residue T501 is modified to Phosphothreonine.

This sequence belongs to the podocalyxin family. In terms of assembly, monomer; when associated with the membrane raft. Oligomer; when integrated in the apical membrane. Found in a complex with EZR, PODXL and NHERF2. Associates with the actin cytoskeleton through complex formation with EZR and NHERF2. Interacts (via the C-terminal PDZ-binding motif DTHL) with NHERF1 (via the PDZ domains); interaction is not detected in glomerular epithelium cells, take place early in the secretory pathway and is necessary for its apical membrane sorting. Interacts (via the C-terminal PDZ-binding motif DTHL) with NHERF2 (via the PDZ 1 domain); interaction is detected in glomerular epithelium cells. Interacts with EZR. In terms of processing, N- and O-linked glycosylated. Sialoglycoprotein. Expressed in liver cells and hematopoietic cells (at protein level). Glomerular epithelium cell (podocyte).

The protein resides in the apical cell membrane. It is found in the cell projection. The protein localises to the microvillus. Its subcellular location is the membrane raft. It localises to the lamellipodium. The protein resides in the filopodium. It is found in the ruffle. The protein localises to the membrane. Functionally, involved in the regulation of both adhesion and cell morphology and cancer progression. Functions as an anti-adhesive molecule that maintains an open filtration pathway between neighboring foot processes in the podocyte by charge repulsion. Acts as a pro-adhesive molecule, enhancing the adherence of cells to immobilized ligands, increasing the rate of migration and cell-cell contacts in an integrin-dependent manner. Induces the formation of apical actin-dependent microvilli. Involved in the formation of a preapical plasma membrane subdomain to set up initial epithelial polarization and the apical lumen formation during renal tubulogenesis. Plays a role in cancer development and aggressiveness by inducing cell migration and invasion through its interaction with the actin-binding protein EZR. Affects EZR-dependent signaling events, leading to increased activities of the MAPK and PI3K pathways in cancer cells. The protein is Podocalyxin (Podxl) of Mus musculus (Mouse).